Reading from the N-terminus, the 263-residue chain is Phosphatidylglycerol--prolipoprotein diacylglyceryl transferase (263 aa).

4 helical membrane-spanning segments follow: residues Val10–Phe30, Met56–Tyr76, Ile91–Leu111, and Gly117–Phe137. Arg139 provides a ligand contact to a 1,2-diacyl-sn-glycero-3-phospho-(1'-sn-glycerol). 3 consecutive transmembrane segments (helical) span residues Pro171–Phe191, Gly199–Val219, and Phe231–Leu251.

The protein belongs to the Lgt family.

The protein localises to the cell inner membrane. It carries out the reaction L-cysteinyl-[prolipoprotein] + a 1,2-diacyl-sn-glycero-3-phospho-(1'-sn-glycerol) = an S-1,2-diacyl-sn-glyceryl-L-cysteinyl-[prolipoprotein] + sn-glycerol 1-phosphate + H(+). It participates in protein modification; lipoprotein biosynthesis (diacylglyceryl transfer). Catalyzes the transfer of the diacylglyceryl group from phosphatidylglycerol to the sulfhydryl group of the N-terminal cysteine of a prolipoprotein, the first step in the formation of mature lipoproteins. This Nitratidesulfovibrio vulgaris (strain ATCC 29579 / DSM 644 / CCUG 34227 / NCIMB 8303 / VKM B-1760 / Hildenborough) (Desulfovibrio vulgaris) protein is Phosphatidylglycerol--prolipoprotein diacylglyceryl transferase.